The primary structure comprises 366 residues: DNA replication and repair protein RecF (366 aa).

30 to 37 (GRNAQGKT) serves as a coordination point for ATP.

The protein belongs to the RecF family.

The protein localises to the cytoplasm. The RecF protein is involved in DNA metabolism; it is required for DNA replication and normal SOS inducibility. RecF binds preferentially to single-stranded, linear DNA. It also seems to bind ATP. The chain is DNA replication and repair protein RecF from Streptococcus thermophilus (strain CNRZ 1066).